The primary structure comprises 254 residues: Type III pantothenate kinase (254 aa).

Residue 6 to 13 (DVGNSNIV) coordinates ATP. Substrate contacts are provided by residues tyrosine 100 and 107 to 110 (GADR). Aspartate 109 (proton acceptor) is an active-site residue. K(+) is bound at residue aspartate 129. Threonine 132 serves as a coordination point for ATP. Residue threonine 184 participates in substrate binding.

Belongs to the type III pantothenate kinase family. In terms of assembly, homodimer. NH4(+) serves as cofactor. K(+) is required as a cofactor.

It localises to the cytoplasm. It catalyses the reaction (R)-pantothenate + ATP = (R)-4'-phosphopantothenate + ADP + H(+). Its pathway is cofactor biosynthesis; coenzyme A biosynthesis; CoA from (R)-pantothenate: step 1/5. Its function is as follows. Catalyzes the phosphorylation of pantothenate (Pan), the first step in CoA biosynthesis. In Pelobacter propionicus (strain DSM 2379 / NBRC 103807 / OttBd1), this protein is Type III pantothenate kinase.